The sequence spans 586 residues: CTP synthase (586 aa).

The tract at residues 1–278 (MRKHPQTATK…DAFVVRRLNL (278 aa)) is amidoligase domain. Serine 20 lines the CTP pocket. Serine 20 contacts UTP. Residues 21–26 (SLGKGL) and aspartate 78 contribute to the ATP site. The Mg(2+) site is built by aspartate 78 and glutamate 152. Residues 159–161 (DIE), 199–204 (KTKPTQ), and lysine 235 each bind CTP. Residues 199–204 (KTKPTQ) and lysine 235 each bind UTP. The region spanning 303–551 (RIALVGKYVE…VGAAIDYKAG (249 aa)) is the Glutamine amidotransferase type-1 domain. Residue glycine 366 coordinates L-glutamine. Catalysis depends on cysteine 393, which acts as the Nucleophile; for glutamine hydrolysis. L-glutamine-binding positions include 394 to 397 (LGLQ), glutamate 416, and arginine 477. Residues histidine 524 and glutamate 526 contribute to the active site. Residues 560 to 586 (EIPEHTPNGSSHRDGVGQPLPEPASRG) form a disordered region.

This sequence belongs to the CTP synthase family. Homotetramer.

It catalyses the reaction UTP + L-glutamine + ATP + H2O = CTP + L-glutamate + ADP + phosphate + 2 H(+). The enzyme catalyses L-glutamine + H2O = L-glutamate + NH4(+). It carries out the reaction UTP + NH4(+) + ATP = CTP + ADP + phosphate + 2 H(+). Its pathway is pyrimidine metabolism; CTP biosynthesis via de novo pathway; CTP from UDP: step 2/2. Its activity is regulated as follows. Allosterically activated by GTP, when glutamine is the substrate; GTP has no effect on the reaction when ammonia is the substrate. The allosteric effector GTP functions by stabilizing the protein conformation that binds the tetrahedral intermediate(s) formed during glutamine hydrolysis. Inhibited by the product CTP, via allosteric rather than competitive inhibition. Its function is as follows. Catalyzes the ATP-dependent amination of UTP to CTP with either L-glutamine or ammonia as the source of nitrogen. Regulates intracellular CTP levels through interactions with the four ribonucleotide triphosphates. The chain is CTP synthase from Mycobacterium tuberculosis (strain ATCC 25177 / H37Ra).